We begin with the raw amino-acid sequence, 944 residues long: Protein translocase subunit SecA (944 aa).

ATP contacts are provided by residues Gln90, 108 to 112 (GEGKT), and Asp509. A disordered region spans residues 533-565 (VKPEEGHKPPVSPQRKTKSAGFKEEKNKNLSIS).

It belongs to the SecA family. In terms of assembly, monomer and homodimer. Part of the essential Sec protein translocation apparatus which comprises SecA, SecYEG and auxiliary proteins SecDF. Other proteins may also be involved.

The protein localises to the cell inner membrane. Its subcellular location is the cellular thylakoid membrane. The protein resides in the cytoplasm. It carries out the reaction ATP + H2O + cellular proteinSide 1 = ADP + phosphate + cellular proteinSide 2.. Its function is as follows. Part of the Sec protein translocase complex. Interacts with the SecYEG preprotein conducting channel. Has a central role in coupling the hydrolysis of ATP to the transfer of proteins into and across the cell membrane, serving as an ATP-driven molecular motor driving the stepwise translocation of polypeptide chains across the membrane. Probably participates in protein translocation into and across both the cytoplasmic and thylakoid membranes in cyanobacterial cells. This is Protein translocase subunit SecA from Prochlorococcus marinus (strain NATL1A).